Here is a 689-residue protein sequence, read N- to C-terminus: Glycine--tRNA ligase beta subunit (689 aa).

The protein belongs to the class-II aminoacyl-tRNA synthetase family. As to quaternary structure, tetramer of two alpha and two beta subunits.

Its subcellular location is the cytoplasm. It catalyses the reaction tRNA(Gly) + glycine + ATP = glycyl-tRNA(Gly) + AMP + diphosphate. This chain is Glycine--tRNA ligase beta subunit, found in Salmonella heidelberg (strain SL476).